Reading from the N-terminus, the 39-residue chain is uncharacterized protein (39 aa).

Positions 1 to 21 (MHLRSRWWLALLYCKDPVSRS) are cleaved as a signal peptide.

This is an uncharacterized protein from Saccharomyces cerevisiae (strain ATCC 204508 / S288c) (Baker's yeast).